Consider the following 405-residue polypeptide: N-methyltransferase nanE (405 aa).

Residues 238-239, D261, and 290-291 contribute to the S-adenosyl-L-methionine site; these read GG and HH.

This sequence belongs to the class I-like SAM-binding methyltransferase superfamily. Cation-independent O-methyltransferase family.

The protein operates within secondary metabolite biosynthesis. N-methyltransferase; part of the gene cluster that mediates the biosynthesis of the benzazepine alkaloid nanangelenin A which contains an unprecedented 3,4-dihydro-1-benzazepine-2,5-dione-N-prenyl-N-acetoxy-anthranilamide scaffold. The first step of nanangelenin biosynthesis is catalyzed by the indoleamine 2,3-dioxygenase nanC which produces N-formyl-kynurenine through the catabolism of tryptophan. The two-module NRPS nanA then utilizes anthranilate (Ant) and L-kynurenine (L-Kyn) to assemble the dipeptide product nanangelenin B. The first adenylation domain of nanA (A1) loads anthranilate onto the T1 domain, while A2 loads kynurenine, generated through spontaneous nonenzymatic deformylation of the nanC-supplied N-formyl-kynurenine. The peptide bond formation between the tethered amino acids is catalyzed by the first condensation domain (C1) between anthranilate's carbonyl carbon and kynurenine's aliphatic primary amine. The second C domain (C2) catalyzes the final cyclization event between the aromatic amine of kynurenine and the tethered carbonyl carbon, yielding nanangelenin B. The terminal T3 domain enhances the catalytic efficiency of C2, suggesting the T2-tethered Ant-L-Kyn is transferred to T3 prior to cyclization by C2. Once released from nanA, nanangelenin B is then prenylated by the prenyltransferase nanD to form nanangelenin C. Nanangelenin C is then N-hydroxylated by the FAD-dependent monooxygenase nanF and further acetylated by the acetyltransferase nanB to yield nanangelenin F. Finally, the N-methyltransferase nanE methylates the amide nitrogen of 1-benzazepine to convert nanangelenin F into nanangelenin A. NanE is also able to methylate most of the intermediates of the pathway such as nanangelenin B and nanangelenin C to produce nanangelenin D and nanangelenin E, respectively. In Aspergillus nanangensis, this protein is N-methyltransferase nanE.